The sequence spans 292 residues: 4-hydroxy-tetrahydrodipicolinate synthase (292 aa).

A pyruvate-binding site is contributed by Thr-45. The active-site Proton donor/acceptor is Tyr-133. The active-site Schiff-base intermediate with substrate is Lys-161. A pyruvate-binding site is contributed by Ile-203.

Belongs to the DapA family. In terms of assembly, homotetramer; dimer of dimers.

It is found in the cytoplasm. It carries out the reaction L-aspartate 4-semialdehyde + pyruvate = (2S,4S)-4-hydroxy-2,3,4,5-tetrahydrodipicolinate + H2O + H(+). The protein operates within amino-acid biosynthesis; L-lysine biosynthesis via DAP pathway; (S)-tetrahydrodipicolinate from L-aspartate: step 3/4. Its function is as follows. Catalyzes the condensation of (S)-aspartate-beta-semialdehyde [(S)-ASA] and pyruvate to 4-hydroxy-tetrahydrodipicolinate (HTPA). This chain is 4-hydroxy-tetrahydrodipicolinate synthase, found in Escherichia fergusonii (strain ATCC 35469 / DSM 13698 / CCUG 18766 / IAM 14443 / JCM 21226 / LMG 7866 / NBRC 102419 / NCTC 12128 / CDC 0568-73).